The following is a 553-amino-acid chain: Arginine--tRNA ligase (553 aa).

A 'HIGH' region motif is present at residues 123–133; the sequence is ANPTGPLTIGR.

It belongs to the class-I aminoacyl-tRNA synthetase family. As to quaternary structure, monomer.

Its subcellular location is the cytoplasm. The enzyme catalyses tRNA(Arg) + L-arginine + ATP = L-arginyl-tRNA(Arg) + AMP + diphosphate. The chain is Arginine--tRNA ligase from Chlorobium phaeobacteroides (strain BS1).